The chain runs to 482 residues: E3 ubiquitin-protein ligase parkin (482 aa).

The region spanning 30–99 is the Ubiquitin-like domain; sequence LSIYVKTNTG…LGQQSVLHAI (70 aa). The residue at position 94 (S94) is a Phosphoserine; by Pink1. Residues 157–246 form an RING-type 0; atypical zinc finger; it reads AHFFVHCSQC…SGGEKDFAAP (90 aa). Zn(2+) is bound by residues C163, C166, C178, and C181. Residue T187 is modified to Phosphothreonine; by Pink1. The Zn(2+) site is built by C208, C232, H235, C259, C262, C274, H278, C281, C284, C310, C314, C353, C358, C373, C377, C382, C385, H390, C394, C436, and C439. Residues 255–482 form a TRIAD supradomain region; the sequence is KNVPCLACTD…RDCMGAHWFG (228 aa). The RING-type 1 zinc finger occupies 259–314; the sequence is CLACTDVSDTVLVFPCASQHVTCIDCFRHYCRSRLGERQFMPHPDFGYTLPCPAGC. IBR-type zinc fingers lie at residues 334–394 and 432–473; these read DRYQ…IGEC and STKP…EWTR. Residues 436–467 form an RING-type 2; atypical zinc finger; sequence CPKCRTPTERDGGCMHMVCTRAGCGFEWCWVC. C449 is an active-site residue. C454, C459, C464, C467, C475, and H479 together coordinate Zn(2+).

Belongs to the RBR family. Parkin subfamily. Forms an E3 ubiquitin ligase complex with E2 ubiquitin-conjugating enzymes. Interacts with Pink1. Interacts with Marf. Interacts with Paris. Interacts with septins Septin1 and pnut. In terms of processing, auto-ubiquitinates in an E2-dependent manner leading to its own degradation. Phosphorylated. Activation requires phosphorylation at Ser-94 by Pink1 and binding to Pink1-phosphorylated polyubiquitin chains. Phosphorylation at Thr-187 by Pink1 is also important for mitochondrial localization. In terms of tissue distribution, in oocytes, accumulates in early egg chambers where it is enriched until stages 9-10, localizing mainly to the posterior pole and anterior margin (at protein level). After stage 10 it is no longer detected in the oocyte (at protein level). In embryos, ubiquitously expressed in the early stages (stages 2 to 5) (at protein level). Expression levels decrease at later stages and becomes restricted to the brain and nerve cord from stage 9 (at protein level). Relatively higher levels of expression in the head compared to the body. Enriched in the dorsomedial (DM) dopaminergic neurons.

The protein resides in the mitochondrion. It is found in the cytoplasm. Its subcellular location is the cytosol. The catalysed reaction is [E2 ubiquitin-conjugating enzyme]-S-ubiquitinyl-L-cysteine + [acceptor protein]-L-lysine = [E2 ubiquitin-conjugating enzyme]-L-cysteine + [acceptor protein]-N(6)-ubiquitinyl-L-lysine.. The protein operates within protein modification; protein ubiquitination. With respect to regulation, in the autoinhibited state the side chain of Phe-481 inserts into a hydrophobic groove in RING-0, occluding the ubiquitin acceptor site Cys-449, whereas the REP repressor element binds RING-1 and blocks its E2-binding site. Activation of park requires 2 steps: (1) phosphorylation at Ser-94 by Pink1 and (2) binding to phosphorylated ubiquitin, leading to unlock repression of the catalytic Cys-449 by the RING-0 region via an allosteric mechanism and converting park to its fully-active form. According to another report, phosphorylation at Ser-94 by Pink1 is not essential for activation and only binding to phosphorylated ubiquitin is essential to unlock repression. Functionally, E3 ubiquitin-protein ligase which accepts ubiquitin from E2 ubiquitin-conjugating enzymes in the form of a thioester and then directly transfers the ubiquitin to targeted substrates, such as Paris, Marf, Opa1, Miro, pnut, Septin1, Tom20 and porin. Mediates monoubiquitination as well as 'Lys-6', 'Lys-11', 'Lys-48'-linked and 'Lys-63'-linked polyubiquitination of substrates, depending on the context. Protects against mitochondrial dysfunction during cellular stress, by acting downstream of Pink1, to coordinate mitochondrial quality control mechanisms that remove and replace dysfunctional mitochondrial components. Depending on the severity of mitochondrial damage and/or dysfunction, activity ranges from preventing apoptosis and stimulating mitochondrial biogenesis to regulating mitochondrial dynamics and eliminating severely damaged mitochondria via mitophagy. Appears to be particularly important in maintaining the physiology and function of cells with high energy demands that are undergoing stress or altered metabolic environment, including spermatids, muscle cells and neurons such as the dopaminergic (DA) neurons. Activation and recruitment onto the outer membrane of damaged/dysfunctional mitochondria (OMM) requires Pink1-mediated phosphorylation of both park and ubiquitin. In depolarized mitochondria, mediates the decision between mitophagy or preventing apoptosis by inducing either the poly- or monoubiquitination of porin/VDAC; polyubiquitination of porin promotes mitophagy, while monoubiquitination of porin decreases mitochondrial calcium influx which ultimately inhibits apoptosis. When cellular stress results in irreversible mitochondrial damage, promotes the autophagic degradation of dysfunctional depolarized mitochondria (mitophagy) by promoting the ubiquitination of mitochondrial proteins. Preferentially assembles 'Lys-6'-, 'Lys-11'- and 'Lys-63'-linked polyubiquitin chains following mitochondrial damage, leading to mitophagy. In developing tissues, inhibits JNK-mediated apoptosis by negatively regulating bsk transcription. The Pink1-park pathway also promotes fission and/or inhibits fusion of damaged mitochondria by mediating the ubiquitination and subsequent degradation of proteins involved in mitochondrial fusion/fission such as Marf, Opa1 and fzo. This prevents the refusion of unhealthy mitochondria with the healthy mitochondrial network and/or initiates mitochondrial fragmentation facilitating their later engulfment by autophagosomes. Regulates motility of damaged mitochondria by phosphorylating Miro which likely promotes its park-dependent degradation by the proteasome; in motor neurons, this inhibits mitochondrial intracellular anterograde transport along the axons which probably increases the chance of the mitochondria being eliminated in the soma. The Pink1-park pathway is also involved in mitochondrial regeneration processes such as promoting mitochondrial biogenesis, activating localized mitochondrial repair, promoting selective turnover of mitochondrial proteins and initiating the mitochondrial import of endogenous proteins. Involved in mitochondrial biogenesis via the ubiquitination of transcriptional repressor Paris which leads to its subsequent proteasomal degradation and allows activation of the transcription factor srl. Promotes localized mitochondrial repair by activating the translation of specific nuclear-encoded mitochondrial RNAs (nc-mtRNAs) on the mitochondrial surface, including several key electron transport chain component nc-mtRNAs. This is E3 ubiquitin-protein ligase parkin from Drosophila melanogaster (Fruit fly).